A 338-amino-acid polypeptide reads, in one-letter code: Anthranilate phosphoribosyltransferase (338 aa).

Residues G78, 81-82 (GD), T86, 88-91 (NIST), 106-114 (KHGNRSVSS), and S118 contribute to the 5-phospho-alpha-D-ribose 1-diphosphate site. G78 is a binding site for anthranilate. Residue S90 coordinates Mg(2+). N109 lines the anthranilate pocket. R164 lines the anthranilate pocket. Residues D223 and E224 each contribute to the Mg(2+) site.

This sequence belongs to the anthranilate phosphoribosyltransferase family. As to quaternary structure, homodimer. Mg(2+) is required as a cofactor.

It catalyses the reaction N-(5-phospho-beta-D-ribosyl)anthranilate + diphosphate = 5-phospho-alpha-D-ribose 1-diphosphate + anthranilate. It functions in the pathway amino-acid biosynthesis; L-tryptophan biosynthesis; L-tryptophan from chorismate: step 2/5. In terms of biological role, catalyzes the transfer of the phosphoribosyl group of 5-phosphorylribose-1-pyrophosphate (PRPP) to anthranilate to yield N-(5'-phosphoribosyl)-anthranilate (PRA). This is Anthranilate phosphoribosyltransferase from Bacillus licheniformis (strain ATCC 14580 / DSM 13 / JCM 2505 / CCUG 7422 / NBRC 12200 / NCIMB 9375 / NCTC 10341 / NRRL NRS-1264 / Gibson 46).